The chain runs to 1328 residues: Peroxidasin homolog pxn-2 (1328 aa).

The N-terminal stretch at 1-16 is a signal peptide; that stretch reads MLLEFLLLIGISLSTA. In terms of domain architecture, LRRNT spans 17 to 45; the sequence is CPSECRCAGLDVHCEGKNLTAIPGHIPIA. A glycan (N-linked (GlcNAc...) asparagine) is linked at Asn34. LRR repeat units lie at residues 42-66, 67-90, 92-114, 116-137, 138-161, and 164-191; these read IPIATTNLYFSNNLLNSLSKSNFQA, LPNLQYLDLSNNSIRDIEETLLDS, PGLKYLDLSWNKIRYVPKLSTAP, ALVSLNLVHNEISRLDNDLVSH, SPYMQTFLIQRNRIQSLPHDFFNS, and VPTLKTVKMAGNPWSCDCRMVNVKQFAD. A glycan (N-linked (GlcNAc...) asparagine) is linked at Asn77. Asn220 is a glycosylation site (N-linked (GlcNAc...) asparagine). Positions 305–332 are disordered; that stretch reads KKMQASSSTEPPITTTTMEPMTTSTMDS. The span at 310–332 shows a compositional bias: low complexity; sequence SSSTEPPITTTTMEPMTTSTMDS. Ig-like C2-type domains lie at 346-438 and 445-532; these read PEID…FSVS and PVII…ANLL. Residues Cys373 and Cys422 are joined by a disulfide bond. Residues Asn403 and Asn455 are each glycosylated (N-linked (GlcNAc...) asparagine). Cys466 and Cys516 are disulfide-bonded. An N-linked (GlcNAc...) asparagine glycan is attached at Asn630. An intrachain disulfide couples Cys660 to Cys676. Asp754 provides a ligand contact to heme b. His755 acts as the Proton acceptor in catalysis. Ca(2+) is bound at residue Asp756. Disulfide bonds link Cys775–Cys785 and Cys779–Cys807. N-linked (GlcNAc...) asparagine glycosylation occurs at Asn776. Ca(2+) is bound by residues Thr839, Tyr841, Asp843, and Ser845. Residue Asn894 is glycosylated (N-linked (GlcNAc...) asparagine). Residues Glu913 and His1008 each contribute to the heme b site. One copy of the LRR 7 repeat lies at 1085–1109; it reads ALDLAALNIQRGRDHGLPSWTEYRK. Disulfide bonds link Cys1111-Cys1168 and Cys1209-Cys1236. N-linked (GlcNAc...) asparagine glycans are attached at residues Asn1112 and Asn1128. Residues 1204–1225 form an LRR 8 repeat; that stretch reads LSKIICTNGDDIDRIQRDIFVY. N-linked (GlcNAc...) asparagine glycosylation is present at Asn1228. Residues 1266-1297 form a disordered region; sequence IGGDEKAKRRKRRHHHSKKSCHDKGKRRKSGD. The span at 1273 to 1295 shows a compositional bias: basic residues; that stretch reads KRRKRRHHHSKKSCHDKGKRRKS. Residue Asn1300 is glycosylated (N-linked (GlcNAc...) asparagine).

Belongs to the peroxidase family. XPO subfamily. It depends on Ca(2+) as a cofactor. Requires heme b as cofactor. As to expression, expressed in vulval muscles and in some neurons including PVQ. Expressed in the hypodermis and in coelomocytes.

Its subcellular location is the secreted. It is found in the extracellular space. The protein resides in the extracellular matrix. It localises to the basement membrane. The catalysed reaction is L-lysyl-[collagen] + L-methionyl-[collagen] + H2O2 = [collagen]-L-lysyl-N-S-L-methionyl-[collagen] + 2 H2O + H(+). The enzyme catalyses bromide + H2O2 = hypobromite + H2O. It carries out the reaction L-lysyl-[collagen] + L-methionyl-[collagen] + hypobromite = [collagen]-L-lysyl-N-S-L-methionyl-[collagen] + bromide + H2O + H(+). It catalyses the reaction L-tyrosyl-[protein] + bromide + H2O2 + H(+) = 3-bromo-L-tyrosyl-[protein] + 2 H2O. The catalysed reaction is hypobromite + L-tyrosyl-[protein] + H(+) = 3-bromo-L-tyrosyl-[protein] + H2O. In terms of biological role, catalyzes the two-electron oxidation of bromide by hydrogen peroxide and generates hypobromite as a reactive intermediate which mediates the formation of sulfilimine cross-links between methionine and hydroxylysine residues within an uncross-linked collagen IV/COL4A1 NC1 hexamer. Required for embryonic morphogenesis playing a role in epidermal elongation at the twofold stage of embryonic development. Required post-embryonically for basement membrane integrity and muscle-epidermal attachments, and specifically in the function of basement membrane components such as the type IV collagens. May have a role in inhibiting axon regeneration. May functionally antagonize the peroxidasin pxn-1. The protein is Peroxidasin homolog pxn-2 of Caenorhabditis elegans.